We begin with the raw amino-acid sequence, 418 residues long: Deubiquitinase and deneddylase Dub1 (418 aa).

The span at 1 to 10 shows a compositional bias: polar residues; sequence MLSPTNSTSK. The segment at 1-23 is disordered; sequence MLSPTNSTSKKAPVPPQDSSKPV. Residues 40 to 60 traverse the membrane as a helical segment; the sequence is TALAVLLVVVTLGLILLFYSF. The disordered stretch occupies residues 72–143; the sequence is TRPSTKEQPT…PPLPPKAPKP (72 aa). Residues 86–141 show a composition bias toward pro residues; it reads VPLPSPPLAVPRPSTPPPPVISRPSTPPAPTPAISPPSTPSAPKPSTPPPLPPKAP. Catalysis depends on residues histidine 288, aspartate 305, and cysteine 358.

This sequence belongs to the peptidase C48 family.

Its subcellular location is the secreted. The protein resides in the host cell. It is found in the membrane. In terms of biological role, effector proteins function to alter host cell physiology and promote bacterial survival in host tissues. This protease possesses deubiquitinating and deneddylating activities. This Chlamydia trachomatis serovar D (strain ATCC VR-885 / DSM 19411 / UW-3/Cx) protein is Deubiquitinase and deneddylase Dub1 (cdu1).